The following is a 49-amino-acid chain: Metallothionein (49 aa).

The segment at 1 to 16 (SCAGSCKCKNCRCRSC) is beta. Residues C2, C6, C8, C11, C13, C16, C20, C21, C23, C24, C28, C31, C35, C37, C45, C47, and C48 each coordinate a divalent metal cation. An alpha region spans residues 17–49 (RKSCCSCCPAGCNNCAKGCVCKEPASSKCSCCH).

It belongs to the metallothionein superfamily. Type 1 family.

Its function is as follows. Metallothioneins have a high content of cysteine residues that bind various heavy metals. This is Metallothionein from Phasianus colchicus colchicus (Black-necked pheasant).